A 265-amino-acid polypeptide reads, in one-letter code: Glutamate racemase (265 aa).

Substrate contacts are provided by residues 12–13 (DS) and 44–45 (YG). Cys-75 functions as the Proton donor/acceptor in the catalytic mechanism. 76–77 (NT) lines the substrate pocket. Cys-183 serves as the catalytic Proton donor/acceptor. Position 184–185 (184–185 (TH)) interacts with substrate.

It belongs to the aspartate/glutamate racemases family.

The catalysed reaction is L-glutamate = D-glutamate. It functions in the pathway cell wall biogenesis; peptidoglycan biosynthesis. Functionally, provides the (R)-glutamate required for cell wall biosynthesis. This is Glutamate racemase from Carboxydothermus hydrogenoformans (strain ATCC BAA-161 / DSM 6008 / Z-2901).